The following is a 246-amino-acid chain: Complement C1q tumor necrosis factor-related protein 3 (246 aa).

Residues 1–22 form the signal peptide; the sequence is MLGRQRIWWHLLPLLFLPFCLC. The Collagen-like domain maps to 51-113; the sequence is GYQGPPGPPG…KGEKGYPGVP (63 aa). Residues 53 to 112 form a disordered region; that stretch reads QGPPGPPGPPGIPGNHGNNGNNGATGHEGAKGEKGDKGDLGPRGERGQHGPKGEKGYPGV. A compositionally biased stretch (pro residues) spans 55-64; it reads PPGPPGPPGI. Over residues 65–74 the composition is skewed to low complexity; sequence PGNHGNNGNN. Over residues 80–107 the composition is skewed to basic and acidic residues; sequence EGAKGEKGDKGDLGPRGERGQHGPKGEK. Positions 113–246 constitute a C1q domain; the sequence is PPELQIAFMA…FAGFLLFETK (134 aa).

It is found in the secreted. The protein is Complement C1q tumor necrosis factor-related protein 3 (C1qtnf3) of Mus musculus (Mouse).